Consider the following 300-residue polypeptide: tRNA dimethylallyltransferase (300 aa).

8 to 15 is an ATP binding site; that stretch reads GASASGKS. 10–15 contributes to the substrate binding site; it reads SASGKS. The interaction with substrate tRNA stretch occupies residues 33–36; it reads DSLS.

It belongs to the IPP transferase family. As to quaternary structure, monomer. Requires Mg(2+) as cofactor.

It carries out the reaction adenosine(37) in tRNA + dimethylallyl diphosphate = N(6)-dimethylallyladenosine(37) in tRNA + diphosphate. Its function is as follows. Catalyzes the transfer of a dimethylallyl group onto the adenine at position 37 in tRNAs that read codons beginning with uridine, leading to the formation of N6-(dimethylallyl)adenosine (i(6)A). This is tRNA dimethylallyltransferase from Wolinella succinogenes (strain ATCC 29543 / DSM 1740 / CCUG 13145 / JCM 31913 / LMG 7466 / NCTC 11488 / FDC 602W) (Vibrio succinogenes).